Reading from the N-terminus, the 474-residue chain is Aspartyl/glutamyl-tRNA(Asn/Gln) amidotransferase subunit B (474 aa).

It belongs to the GatB/GatE family. GatB subfamily. In terms of assembly, heterotrimer of A, B and C subunits.

The enzyme catalyses L-glutamyl-tRNA(Gln) + L-glutamine + ATP + H2O = L-glutaminyl-tRNA(Gln) + L-glutamate + ADP + phosphate + H(+). It carries out the reaction L-aspartyl-tRNA(Asn) + L-glutamine + ATP + H2O = L-asparaginyl-tRNA(Asn) + L-glutamate + ADP + phosphate + 2 H(+). In terms of biological role, allows the formation of correctly charged Asn-tRNA(Asn) or Gln-tRNA(Gln) through the transamidation of misacylated Asp-tRNA(Asn) or Glu-tRNA(Gln) in organisms which lack either or both of asparaginyl-tRNA or glutaminyl-tRNA synthetases. The reaction takes place in the presence of glutamine and ATP through an activated phospho-Asp-tRNA(Asn) or phospho-Glu-tRNA(Gln). This chain is Aspartyl/glutamyl-tRNA(Asn/Gln) amidotransferase subunit B, found in Limosilactobacillus reuteri (strain DSM 20016) (Lactobacillus reuteri).